The chain runs to 318 residues: GTP cyclohydrolase MptA (318 aa).

Belongs to the GTP cyclohydrolase IV family. As to quaternary structure, homodimer. Requires Fe(2+) as cofactor.

The catalysed reaction is GTP + H2O = 7,8-dihydroneopterin 2',3'-cyclic phosphate + formate + diphosphate + H(+). The protein operates within cofactor biosynthesis; 5,6,7,8-tetrahydromethanopterin biosynthesis. In terms of biological role, converts GTP to 7,8-dihydro-D-neopterin 2',3'-cyclic phosphate, the first intermediate in the biosynthesis of coenzyme methanopterin. The polypeptide is GTP cyclohydrolase MptA (Methanothermobacter thermautotrophicus (strain ATCC 29096 / DSM 1053 / JCM 10044 / NBRC 100330 / Delta H) (Methanobacterium thermoautotrophicum)).